Reading from the N-terminus, the 277-residue chain is Putative phosphoenolpyruvate synthase regulatory protein (277 aa).

Residue 152–159 coordinates ADP; that stretch reads GVSRCGKT.

It belongs to the pyruvate, phosphate/water dikinase regulatory protein family. PSRP subfamily.

The catalysed reaction is [pyruvate, water dikinase] + ADP = [pyruvate, water dikinase]-phosphate + AMP + H(+). The enzyme catalyses [pyruvate, water dikinase]-phosphate + phosphate + H(+) = [pyruvate, water dikinase] + diphosphate. Bifunctional serine/threonine kinase and phosphorylase involved in the regulation of the phosphoenolpyruvate synthase (PEPS) by catalyzing its phosphorylation/dephosphorylation. The sequence is that of Putative phosphoenolpyruvate synthase regulatory protein from Chromohalobacter salexigens (strain ATCC BAA-138 / DSM 3043 / CIP 106854 / NCIMB 13768 / 1H11).